Reading from the N-terminus, the 497-residue chain is MEMTLMVSLCLTTLLTLLLLKKFLKRTAKKVNLPPSPWRIPVIGNLHQLSLHPHRSLHSLSLRYGPLMLLHFGRVPILVVSSSEAAHEILKTHDLKFANRPKSKAVHGLMNGGRDVVFGPYGEYWRQMKSVCILNLLTNKMVASFEKVREEEVNAMMEKLEKASCSSSAENLSELFVTLTSDVTSRVSLGKKYWEDETAGGLKKRVRQIMELLREFPIGDYVPALAWIDRINGFNSKIVEVSRAYSDLMEKVVQEHLEAGEHKADFVNILLSIEKEKNNGFKVQRNDIKFMILDMFIGGISTSSTLLEWIMTELIRNPECMKKLQNEIRSTIRPHGSYIKEKEVENMRYLKAVIKEVFRVHPPLPLILPRLLTEDVKVKGYDIAAGTEVLINAWSIHRDPAIWGPDAEEFKPERHLDSTLDYHGQDLKYIPFGSGRRICPGINLAMGLVEVTLANLVGRFDWSVDPGPNGDQPDLAEDFGLDVCRKNPLIAFPSSVA.

Residues 4 to 24 traverse the membrane as a helical segment; it reads TLMVSLCLTTLLTLLLLKKFL. C439 is a binding site for heme.

Belongs to the cytochrome P450 family. Heme is required as a cofactor.

It localises to the membrane. This is Cytochrome P450 71A18 (CYP71A18) from Arabidopsis thaliana (Mouse-ear cress).